Consider the following 102-residue polypeptide: Large ribosomal subunit protein eL21 (102 aa).

Over residues methionine 1–arginine 21 the composition is skewed to basic residues. Residues methionine 1 to glutamine 33 are disordered.

It belongs to the eukaryotic ribosomal protein eL21 family.

This Methanopyrus kandleri (strain AV19 / DSM 6324 / JCM 9639 / NBRC 100938) protein is Large ribosomal subunit protein eL21.